The chain runs to 775 residues: N6-adenosine-methyltransferase non-catalytic subunit MTB (775 aa).

Residues 1–10 (MKKKQEESSL) show a composition bias toward basic and acidic residues. 2 disordered regions span residues 1-424 (MKKK…GAIP) and 520-569 (DRGG…EQND). Residues 40–49 (FESSSRSGGS) show a composition bias toward low complexity. Basic and acidic residues-rich tracts occupy residues 50 to 79 (KSKE…ERTH), 100 to 117 (DGDH…DSGG), 125 to 222 (EHGE…LKDN), 229 to 278 (SSGD…RGEA), and 333 to 344 (EWAHNQEGRQRS). Over residues 375-400 (QRGSTPGRTNFVQTPNRGYQTPQGTR) the composition is skewed to polar residues.

Belongs to the MT-A70-like family. In terms of assembly, forms homodimers. Interacts with HAKAI, MTA and VIR. Associates with MTA, FIP37, VIR and HAKAI to form the m6A writer complex which is essential for adenosine methylation at specific mRNA sequences.

Its subcellular location is the nucleus speckle. The protein localises to the nucleus. The protein resides in the nucleoplasm. In terms of biological role, probable non-catalytic subunit of the N6-methyltransferase complex, a multiprotein complex that mediates N6-methyladenosine (m6A) methylation at the 5'-[AG]GAC-3' consensus sites of some mRNAs. Associates with MTA, FIP37, VIR and HAKAI to form the m6A writer complex which is essential for adenosine methylation at specific mRNA sequences. N6-methyladenosine (m6A) plays a role in mRNA stability, processing, translation efficiency and editing. The chain is N6-adenosine-methyltransferase non-catalytic subunit MTB from Arabidopsis thaliana (Mouse-ear cress).